A 151-amino-acid polypeptide reads, in one-letter code: RNA polymerase-binding transcription factor DksA (151 aa).

A coiled-coil region spans residues N33–E54. 4 residues coordinate Zn(2+): C114, C117, C135, and C138. Residues C114–C138 form a dksA C4-type zinc finger.

Belongs to the DksA family. Interacts directly with the RNA polymerase.

Its subcellular location is the cytoplasm. Transcription factor that acts by binding directly to the RNA polymerase (RNAP). Required for negative regulation of rRNA expression and positive regulation of several amino acid biosynthesis promoters. Also required for regulation of fis expression. This chain is RNA polymerase-binding transcription factor DksA, found in Escherichia coli O157:H7.